The primary structure comprises 411 residues: Protein Brevis radix-like 2 (411 aa).

Disordered stretches follow at residues 10-31 (KDGG…KSLT) and 103-149 (AAPS…DDDE). Residues 20-31 (ATATPNSGKSLT) are compositionally biased toward polar residues. The segment covering 136–149 (GEEDYDDDDDDDDE) has biased composition (acidic residues). In terms of domain architecture, BRX 1 spans 161 to 217 (REWTAQVEPGVQITFVSIPGGAGNDLKRIRFSREMFNKWEAQRWWGENYDRVVELYN). Disordered stretches follow at residues 245–294 (SRVG…VAAA) and 324–346 (AGPA…ASVS). A compositionally biased stretch (low complexity) spans 276-294 (SRTASSKAQLSSSSSVAAA). Positions 356 to 411 (TEWVEQDEPGVSITIREFGDGTRELRRVRFSRERFGEERAKVWWEQNRDRIHAQYL) constitute a BRX 2 domain.

It belongs to the BRX family.

The protein localises to the nucleus. The protein is Protein Brevis radix-like 2 (BRXL2) of Oryza sativa subsp. japonica (Rice).